The primary structure comprises 372 residues: Histidinol-phosphate aminotransferase (372 aa).

At K229 the chain carries N6-(pyridoxal phosphate)lysine.

It belongs to the class-II pyridoxal-phosphate-dependent aminotransferase family. Histidinol-phosphate aminotransferase subfamily. In terms of assembly, homodimer. The cofactor is pyridoxal 5'-phosphate.

It catalyses the reaction L-histidinol phosphate + 2-oxoglutarate = 3-(imidazol-4-yl)-2-oxopropyl phosphate + L-glutamate. It participates in amino-acid biosynthesis; L-histidine biosynthesis; L-histidine from 5-phospho-alpha-D-ribose 1-diphosphate: step 7/9. This chain is Histidinol-phosphate aminotransferase, found in Bdellovibrio bacteriovorus (strain ATCC 15356 / DSM 50701 / NCIMB 9529 / HD100).